A 485-amino-acid polypeptide reads, in one-letter code: Cobyric acid synthase (485 aa).

The GATase cobBQ-type domain occupies 248-435 (VLKVVVPVLP…LHGLFESPDA (188 aa)). Cys329 serves as the catalytic Nucleophile. His427 is an active-site residue.

It belongs to the CobB/CobQ family. CobQ subfamily.

It participates in cofactor biosynthesis; adenosylcobalamin biosynthesis. In terms of biological role, catalyzes amidations at positions B, D, E, and G on adenosylcobyrinic A,C-diamide. NH(2) groups are provided by glutamine, and one molecule of ATP is hydrogenolyzed for each amidation. This Stutzerimonas stutzeri (strain A1501) (Pseudomonas stutzeri) protein is Cobyric acid synthase.